The sequence spans 395 residues: MGIKHLYQVIQENAPDAVKAGEIKNHFGRKVAIDASMSIYSFLVAVRSDGQQLMSETGETTSHLMGMFYRTLRIVENGIKPVYVFDGAPPKLKSGELAKRFMRKSEAAEAHEEAKEVGTAEDVEKFSRRTVRVTREHNEECKKLLKLMGVPYINAPTEAEAQCAVLARAGKVYAAASEDMDTLCFDSPILLRHLTFSEQRKEPILEIHLDRVLEGLDMDRKQFVDLCILLGCDYLDPIPKVGPNTALKLIRDHGSLEKVVEAIQSDPKKKYTIPEDWPYKDARELFFDPDVRKADHPDCNFKWEAPDVEGLVKFLVEEKAFSEDRVRNGAARLQKNLKTAQQSRLEGFFKPIAKTEQEKATLKRKHEEKLELQKKKKKEEAKAKKEAKSKPRGAV.

The segment at 1–104 is N-domain; it reads MGIKHLYQVI…GELAKRFMRK (104 aa). Asp34 contacts Mg(2+). The DNA site is built by Arg47 and Arg70. Asp86, Glu158, Glu160, Asp179, and Asp181 together coordinate Mg(2+). The segment at 122–253 is I-domain; it reads DVEKFSRRTV…NTALKLIRDH (132 aa). A DNA-binding site is contributed by Glu158. DNA-binding residues include Gly231 and Asp233. Asp233 contacts Mg(2+). Residues 341–349 form an interaction with PCNA region; it reads QQSRLEGFF. Residues 357-389 show a composition bias toward basic and acidic residues; the sequence is QEKATLKRKHEEKLELQKKKKKEEAKAKKEAKS. The disordered stretch occupies residues 357-395; the sequence is QEKATLKRKHEEKLELQKKKKKEEAKAKKEAKSKPRGAV.

Belongs to the XPG/RAD2 endonuclease family. FEN1 subfamily. Interacts with PCNA. Three molecules of FEN1 bind to one PCNA trimer with each molecule binding to one PCNA monomer. PCNA stimulates the nuclease activity without altering cleavage specificity. Mg(2+) serves as cofactor. In terms of processing, phosphorylated. Phosphorylation upon DNA damage induces relocalization to the nuclear plasma.

It localises to the nucleus. The protein localises to the nucleolus. It is found in the nucleoplasm. The protein resides in the mitochondrion. Structure-specific nuclease with 5'-flap endonuclease and 5'-3' exonuclease activities involved in DNA replication and repair. During DNA replication, cleaves the 5'-overhanging flap structure that is generated by displacement synthesis when DNA polymerase encounters the 5'-end of a downstream Okazaki fragment. It enters the flap from the 5'-end and then tracks to cleave the flap base, leaving a nick for ligation. Also involved in the long patch base excision repair (LP-BER) pathway, by cleaving within the apurinic/apyrimidinic (AP) site-terminated flap. Acts as a genome stabilization factor that prevents flaps from equilibrating into structures that lead to duplications and deletions. Also possesses 5'-3' exonuclease activity on nicked or gapped double-stranded DNA, and exhibits RNase H activity. Also involved in replication and repair of rDNA and in repairing mitochondrial DNA. The sequence is that of Flap endonuclease 1 from Ajellomyces dermatitidis (strain ER-3 / ATCC MYA-2586) (Blastomyces dermatitidis).